A 300-amino-acid polypeptide reads, in one-letter code: tRNA dimethylallyltransferase (300 aa).

9–16 serves as a coordination point for ATP; the sequence is GTTASGKS. Substrate is bound at residue 11–16; it reads TASGKS. The tract at residues 34-37 is interaction with substrate tRNA; the sequence is DSLC.

This sequence belongs to the IPP transferase family. As to quaternary structure, monomer. The cofactor is Mg(2+).

The enzyme catalyses adenosine(37) in tRNA + dimethylallyl diphosphate = N(6)-dimethylallyladenosine(37) in tRNA + diphosphate. Its function is as follows. Catalyzes the transfer of a dimethylallyl group onto the adenine at position 37 in tRNAs that read codons beginning with uridine, leading to the formation of N6-(dimethylallyl)adenosine (i(6)A). This chain is tRNA dimethylallyltransferase, found in Campylobacter fetus subsp. fetus (strain 82-40).